A 445-amino-acid chain; its full sequence is Phosphoglucosamine mutase (445 aa).

The active-site Phosphoserine intermediate is the serine 102. Positions 102, 241, 243, and 245 each coordinate Mg(2+). At serine 102 the chain carries Phosphoserine.

The protein belongs to the phosphohexose mutase family. Mg(2+) is required as a cofactor. Post-translationally, activated by phosphorylation.

The enzyme catalyses alpha-D-glucosamine 1-phosphate = D-glucosamine 6-phosphate. Functionally, catalyzes the conversion of glucosamine-6-phosphate to glucosamine-1-phosphate. The protein is Phosphoglucosamine mutase of Escherichia coli O127:H6 (strain E2348/69 / EPEC).